A 270-amino-acid chain; its full sequence is 3-phenylpropionate-dihydrodiol/cinnamic acid-dihydrodiol dehydrogenase (270 aa).

10–34 (FITGGGSGLGLALVERFIEEGAQVA) is a binding site for NAD(+). S143 contributes to the substrate binding site. The Proton acceptor role is filled by Y156.

It belongs to the short-chain dehydrogenases/reductases (SDR) family.

The enzyme catalyses 3-(cis-5,6-dihydroxycyclohexa-1,3-dien-1-yl)propanoate + NAD(+) = 3-(2,3-dihydroxyphenyl)propanoate + NADH + H(+). It carries out the reaction (2E)-3-(cis-5,6-dihydroxycyclohexa-1,3-dien-1-yl)prop-2-enoate + NAD(+) = (2E)-3-(2,3-dihydroxyphenyl)prop-2-enoate + NADH + H(+). Its pathway is aromatic compound metabolism; 3-phenylpropanoate degradation. Its function is as follows. Converts 3-phenylpropionate-dihydrodiol (PP-dihydrodiol) and cinnamic acid-dihydrodiol (CI-dihydrodiol) into 3-(2,3-dihydroxylphenyl)propanoic acid (DHPP) and 2,3-dihydroxicinnamic acid (DHCI), respectively. In Escherichia coli O7:K1 (strain IAI39 / ExPEC), this protein is 3-phenylpropionate-dihydrodiol/cinnamic acid-dihydrodiol dehydrogenase.